The chain runs to 219 residues: Large ribosomal subunit protein bL25 (219 aa).

A disordered region spans residues 176 to 219; it reads VTVVPPTDEPSEEEVEAMEGESATEEPEVVDEDKEDDEEENKED. Positions 184 to 219 are enriched in acidic residues; that stretch reads EPSEEEVEAMEGESATEEPEVVDEDKEDDEEENKED.

Belongs to the bacterial ribosomal protein bL25 family. CTC subfamily. Part of the 50S ribosomal subunit; part of the 5S rRNA/L5/L18/L25 subcomplex. Contacts the 5S rRNA. Binds to the 5S rRNA independently of L5 and L18.

This is one of the proteins that binds to the 5S RNA in the ribosome where it forms part of the central protuberance. This is Large ribosomal subunit protein bL25 from Staphylococcus epidermidis (strain ATCC 12228 / FDA PCI 1200).